Reading from the N-terminus, the 265-residue chain is MSRIQSTLAALAAKNKKGLIPFITAGDPAPELTVPLMHALVAGGADILELGVPFSDPMAEGPVIQRACERALASGVSMHDVLGFVSEFRKTNNSTPVVLMGYANPIERMGQTKFILAAKAAGVDGTIVVDYPPEECEEFAATLKENDMDPIFLLSPTSTEERIQQVAKFGSGFSYYVSLKGVTGAANIDTKEVAERIAAIRKYVKLPIGVGFGIRDAATAKAVAQVSDAVVIGSRIIQELENSPREQAVERVQTFIAGIRKALDE.

Active-site proton acceptor residues include E49 and E60.

It belongs to the TrpA family. As to quaternary structure, tetramer of two alpha and two beta chains.

The catalysed reaction is (1S,2R)-1-C-(indol-3-yl)glycerol 3-phosphate + L-serine = D-glyceraldehyde 3-phosphate + L-tryptophan + H2O. It participates in amino-acid biosynthesis; L-tryptophan biosynthesis; L-tryptophan from chorismate: step 5/5. Functionally, the alpha subunit is responsible for the aldol cleavage of indoleglycerol phosphate to indole and glyceraldehyde 3-phosphate. This Janthinobacterium sp. (strain Marseille) (Minibacterium massiliensis) protein is Tryptophan synthase alpha chain.